Reading from the N-terminus, the 561-residue chain is MAVLLAAVLASSLYLQVAADFDGRWPRQIVSSIGLCRYGGRIDCCWGWARQSWGQCQPVCQPQCKHGECVGPNKCKCHPGFAGKTCNQDLNECGLKPRPCKHRCMNTFGSYKCYCLNGYMLLPDGSCSSALSCSMANCQYGCDVVKGQVRCQCPSPGLQLAPDGRTCVDIDECATGRVSCPRFRQCVNTFGSYICKCHTGFDLMYIGGKYQCHDIDECSLGQHQCSSYARCYNIHGSYKCQCRDGYEGDGLNCVYIPKVMIEPSGPIHMPERNGTISKGDGGHANRIPDAGSTRWPLKTPYIPPVITNRPTSKPTTRPTPNPTPQPTPPPPPPLPTEPRTTPLPPTPERPSTRPTTIAPATSTTTRVITVDNRIQTDPQKPRGDVFIPRQPTNDLFEIFEIERGVSADEEVKDDPGILIHSCNFDHGLCGWIREKDSDLHWETARDPAGGQYLTVSAAKAPGGKAARLVLRLGHLMHSGDLCLSFRHKVTGLHSGTLQVFVRKHGTHGAALWGRNGGHGWRQTQITLRGADVKSVIFKGEKRRGHTGEIGLDDVSLKRGRC.

A signal peptide spans 1-19; the sequence is MAVLLAAVLASSLYLQVAA. An EGF-like 1 domain is found at 52-87; it reads SWGQCQPVCQPQCKHGECVGPNKCKCHPGFAGKTCN. Intrachain disulfides connect C56–C69, C60–C75, C77–C86, C93–C104, C100–C113, and C115–C127. An EGF-like 2; calcium-binding domain is found at 89-128; the sequence is DLNECGLKPRPCKHRCMNTFGSYKCYCLNGYMLLPDGSCS. The EGF-like 3 domain occupies 132-168; sequence SCSMANCQYGCDVVKGQVRCQCPSPGLQLAPDGRTCV. The region spanning 169-213 is the EGF-like 4; calcium-binding domain; sequence DIDECATGRVSCPRFRQCVNTFGSYICKCHTGFDLMYIGGKYQCH. 6 disulfides stabilise this stretch: C173–C186, C180–C195, C197–C212, C218–C231, C225–C240, and C242–C253. The 41-residue stretch at 214-254 folds into the EGF-like 5; calcium-binding domain; that stretch reads DIDECSLGQHQCSSYARCYNIHGSYKCQCRDGYEGDGLNCV. The tract at residues 266–370 is disordered; the sequence is PIHMPERNGT…TSTTTRVITV (105 aa). Residues 307–316 show a composition bias toward low complexity; sequence TNRPTSKPTT. The span at 317-348 shows a compositional bias: pro residues; the sequence is RPTPNPTPQPTPPPPPPLPTEPRTTPLPPTPE. The span at 352-366 shows a compositional bias: low complexity; the sequence is TRPTTIAPATSTTTR. The short motif at 382 to 384 is the Integrin interaction element; that stretch reads RGD. Residues 420–561 form the MAM domain; it reads HSCNFDHGLC…DDVSLKRGRC (142 aa).

The protein belongs to the nephronectin family. In terms of assembly, homodimer and homotrimer. As to expression, expressed in kidney (at protein level).

Its subcellular location is the secreted. The protein localises to the extracellular space. The protein resides in the extracellular matrix. Its function is as follows. Functional ligand of integrin alpha-8/beta-1 in kidney development. Regulates the expression of GDNF with integrin alpha-8/beta-1 which is essential for kidney development. May also play a role in the development and function of various tissues, regulating cell adhesion, spreading and survival through the binding of several integrins. The chain is Nephronectin (Npnt) from Mus musculus (Mouse).